Reading from the N-terminus, the 220-residue chain is Large ribosomal subunit protein uL3 (220 aa).

The interval 132–153 is disordered; it reads SGRASHGNSRSHNVPGSIGMAQ. Positions 133–145 are enriched in polar residues; it reads GRASHGNSRSHNV. Gln-153 carries the N5-methylglutamine modification.

The protein belongs to the universal ribosomal protein uL3 family. Part of the 50S ribosomal subunit. Forms a cluster with proteins L14 and L19. Methylated by PrmB.

Its function is as follows. One of the primary rRNA binding proteins, it binds directly near the 3'-end of the 23S rRNA, where it nucleates assembly of the 50S subunit. The chain is Large ribosomal subunit protein uL3 from Ralstonia nicotianae (strain ATCC BAA-1114 / GMI1000) (Ralstonia solanacearum).